Reading from the N-terminus, the 110-residue chain is Small ribosomal subunit protein uS10 (110 aa).

Belongs to the universal ribosomal protein uS10 family. As to quaternary structure, part of the 30S ribosomal subunit.

Functionally, involved in the binding of tRNA to the ribosomes. This chain is Small ribosomal subunit protein uS10, found in Coxiella burnetii (strain Dugway 5J108-111).